Reading from the N-terminus, the 203-residue chain is Small ribosomal subunit protein uS4 (203 aa).

The region spanning R93–V156 is the S4 RNA-binding domain.

The protein belongs to the universal ribosomal protein uS4 family. In terms of assembly, part of the 30S ribosomal subunit. Contacts protein S5. The interaction surface between S4 and S5 is involved in control of translational fidelity.

One of the primary rRNA binding proteins, it binds directly to 16S rRNA where it nucleates assembly of the body of the 30S subunit. In terms of biological role, with S5 and S12 plays an important role in translational accuracy. The polypeptide is Small ribosomal subunit protein uS4 (Streptococcus suis (strain 98HAH33)).